The chain runs to 772 residues: Mitochondrial intermediate peptidase (772 aa).

The transit peptide at 1-33 directs the protein to the mitochondrion; the sequence is MLARPSTTVLARRPFFRFRGCLNEPRPTKARCL. Histidine 556 contacts Zn(2+). Residue glutamate 557 is part of the active site. Residues histidine 560 and histidine 563 each contribute to the Zn(2+) site.

Belongs to the peptidase M3 family. Zn(2+) serves as cofactor.

It localises to the mitochondrion matrix. The catalysed reaction is Release of an N-terminal octapeptide as second stage of processing of some proteins imported into the mitochondrion.. In terms of biological role, cleaves proteins, imported into the mitochondrion, to their mature size. While most mitochondrial precursor proteins are processed to the mature form in one step by mitochondrial processing peptidase (MPP), the sequential cleavage by MIP of an octapeptide after initial processing by MPP is a required step for a subgroup of nuclear-encoded precursor proteins destined for the matrix or the inner membrane. The protein is Mitochondrial intermediate peptidase (OCT1) of Coprinopsis scobicola (Ink cap fungus).